Reading from the N-terminus, the 1124-residue chain is MALFPRSILIALVLSFVLNLGLVTKIHAKDTLDSIIDILSGLTCETQGVGDLMRTEFSHTCIVAPFFTFAVMNLVSPVLYMNTFLKLKINDSDLFNDSDFGNFPGGQCTRANRIDPKNPELRFALCNNAKLIVSRAKSVAESALAIAKAVLTWSDPWDDIKQAWENKKKEYHIPYRGKPGDDGFAFDVGFPVIYWKVIQDRDRICVSTKGFTGDVPVGCKYMKEPFPKSIYNSFIDVEDKNFIKDPTNDTPSDPLALVSCSAAGEGCYQKAYNASKTAVVMTSPLIECIKQMIARLLISKDVCSFDNVDQVVNLSSRQDSALFQFQVGMYKIVTAFLTLYVMFFGFKLLLAGKVPPKSEYINFILKIIFVTYFSIGININPANGSQYDRLDGMIQWAFPFLLNGINGLASWVMNAAPSGLCKFNNIHYDGSVSYIALWDALDCRVAHYLGLDILSTLLVENTYRSHDFLNFDFFSFSAPPYIYLLIPAIISGNMMLVSLALSYPLLVISVAAFMVNATIMCMISIVILGILAPLFVPMFLFAYTRNYFDSWVKLMISFLLQPMVVVTFMITMFAVYDYGFYGKCQYKSKLIHNSIEDKIQGGLKSKRDVLIFYINNDWDDTSQYPDKDSVESCKNSLGYMLNNPINMAFNFAKDNISEIVNSKPGETTTDEFLSKFQFLSGVVLGPGMFFMSPKVLFEKIKNILLALVTACFTLYLMYNFSSQLAEFAADMTEGVALNNVAIKPQAIFKAAMAALSTAGTATKGIDQMASRGGGARDLGGAKGFVSDNTASSGSAVGDNIAVSRGASTPTVTTTTDSSSITNSITKTVSSDVRSDIVTPHSPTTAFSQHSSISSTIPTSVHNIKPTSIKEIVSNNRESKKEINNTMRSQEKIKSASKALGLIDYSFNLKEHDNPIGVKQIRENAEIRDKRVEVEKAWNELVASGRGRIRDQQSEATSERRTNAEKKWKELVDSGVVTEIRERDNSVTNQFDKLADELDKSKKSKVEENKNITKDIKVDNTNTLPQEKVDNTNRRSGLIDYSFNLKEHDNPIGVKQIRENAEIRDKRVKVEKAWNELVASGGGRVQEQAGVKITERRANAEKVWDELVKSGVVTEKRDNSSNENS.

Residues 1 to 28 form the signal peptide; sequence MALFPRSILIALVLSFVLNLGLVTKIHA. A run of 7 helical transmembrane segments spans residues 332–352, 359–379, 393–413, 495–515, 522–542, 555–575, and 700–720; these read IVTAFLTLYVMFFGFKLLLAG, EYINFILKIIFVTYFSIGINI, MIQWAFPFLLNGINGLASWVM, MLVSLALSYPLLVISVAAFMV, MISIVILGILAPLFVPMFLFA, MISFLLQPMVVVTFMITMFAV, and IKNILLALVTACFTLYLMYNF.

This sequence belongs to the TrbL/VirB6 family.

Its subcellular location is the cell membrane. This is an uncharacterized protein from Rickettsia prowazekii (strain Madrid E).